The chain runs to 925 residues: Coronin-7 (925 aa).

4 WD repeats span residues 75 to 115, 124 to 163, 166 to 205, and 209 to 253; these read CHSD…QALP, PEDLPVEVLQFHPTSDGILVSAAGTTVKVWDAAKQQPLTE, AHGDLVQSAVWSRDGALVGTACKDKQLRIFDPRTKPRASQ, and AHEN…SALA. The disordered stretch occupies residues 419-461; that stretch reads VGDADASEGFSSPPSSLTSPSTPSSLGPSLSSTSGIGTSPSLR. Over residues 429–460 the composition is skewed to low complexity; it reads SSPPSSLTSPSTPSSLGPSLSSTSGIGTSPSL. 2 positions are modified to phosphoserine: S462 and S465. Residue K472 forms a Glycyl lysine isopeptide (Lys-Gly) (interchain with G-Cter in ubiquitin) linkage. 3 WD repeats span residues 542-582, 592-632, and 635-674; these read QNGA…LEEV, GHTE…DRLK, and GHQDQIFSLAWSPDGQQLATVCKDGRVRVYRPRSGPEPLQ. K680 is covalently cross-linked (Glycyl lysine isopeptide (Lys-Gly) (interchain with G-Cter in ubiquitin)). The stretch at 728–768 is one WD 8 repeat; that stretch reads DVAPSTLLPSYDPDTGLVLLTGKGDTRVFLYELLPESPFFL. A disordered region spans residues 858 to 925; sequence QPPDMSPVSQ…FEGVDEDEWD (68 aa). The segment covering 866–882 has biased composition (low complexity); the sequence is SQAPREAPARRAPSSAQ. The span at 884 to 896 shows a compositional bias: basic and acidic residues; it reads LEEKSDQQKKEEL. S915 bears the Phosphoserine mark.

Belongs to the WD repeat coronin family. In terms of assembly, interacts with clathrin adapter AP1 complex. This interaction takes place at Golgi membranes and not AP1-positive endosomal membranes. Interacts (when ubiquitinated at Lys-472) with EPS15. In terms of processing, the membrane-associated form is phosphorylated on tyrosine residues. Post-translationally, ubiquitinated via 'Lys-33'-linked ubiquitin chains by the BCR(KLHL20) E3 ubiquitin ligase complex: 'Lys-33'-linked ubiquitination promotes interaction with EPS15 and facilitates actin polymerization at the trans-Golgi network, thereby facilitating post-Golgi trafficking. Deubiquitinated by ZRANB1/TRABID. As to expression, widely expressed. Expressed in the spleen, peripheral leukocytes, testes, brain, thymus and small intestine.

The protein resides in the golgi apparatus membrane. The protein localises to the golgi apparatus. It is found in the trans-Golgi network. Its subcellular location is the cytoplasmic vesicle. It localises to the cytoplasm. The protein resides in the cytosol. Its function is as follows. F-actin regulator involved in anterograde Golgi to endosome transport: upon ubiquitination via 'Lys-33'-linked ubiquitin chains by the BCR(KLHL20) E3 ubiquitin ligase complex, interacts with EPS15 and localizes to the trans-Golgi network, where it promotes actin polymerization, thereby facilitating post-Golgi trafficking. May play a role in the maintenance of the Golgi apparatus morphology. This Homo sapiens (Human) protein is Coronin-7 (CORO7).